Reading from the N-terminus, the 121-residue chain is Large ribosomal subunit protein bL19 (121 aa).

The protein belongs to the bacterial ribosomal protein bL19 family.

Its function is as follows. This protein is located at the 30S-50S ribosomal subunit interface and may play a role in the structure and function of the aminoacyl-tRNA binding site. In Neisseria gonorrhoeae (strain ATCC 700825 / FA 1090), this protein is Large ribosomal subunit protein bL19.